We begin with the raw amino-acid sequence, 235 residues long: Ribonuclease PH (235 aa).

Phosphate-binding positions include arginine 86 and 124–126 (GTR).

Belongs to the RNase PH family. In terms of assembly, homohexameric ring arranged as a trimer of dimers.

It carries out the reaction tRNA(n+1) + phosphate = tRNA(n) + a ribonucleoside 5'-diphosphate. Phosphorolytic 3'-5' exoribonuclease that plays an important role in tRNA 3'-end maturation. Removes nucleotide residues following the 3'-CCA terminus of tRNAs; can also add nucleotides to the ends of RNA molecules by using nucleoside diphosphates as substrates, but this may not be physiologically important. Probably plays a role in initiation of 16S rRNA degradation (leading to ribosome degradation) during starvation. This Francisella philomiragia subsp. philomiragia (strain ATCC 25017 / CCUG 19701 / FSC 153 / O#319-036) protein is Ribonuclease PH.